A 320-amino-acid chain; its full sequence is Zinc finger protein 330 (320 aa).

Residues 1–23 (MPKKKTGARKKAENRREREKQLR) form a disordered region. The Nuclear localization signal signature appears at 3-11 (KKKTGARKK). Over residues 10–22 (KKAENRREREKQL) the composition is skewed to basic and acidic residues. 4 consecutive C4-type zinc fingers follow at residues 42 to 58 (CDKC…CYFC), 67 to 104 (CAQC…CDFC), 129 to 149 (CVEC…CSFC), and 175 to 189 (CVSC…CLRC). Disordered regions lie at residues 206 to 250 (EKGK…ASGY) and 264 to 303 (GASY…TNLN). A compositionally biased stretch (basic and acidic residues) spans 216 to 225 (CGHETQETKD). Acidic residues predominate over residues 269–287 (DEEEDEYEAEDDEEEEDEG). Ser-291 carries the post-translational modification Phosphoserine.

The protein belongs to the NOA36 family.

The protein localises to the nucleus. It is found in the nucleolus. Its subcellular location is the chromosome. It localises to the centromere. This chain is Zinc finger protein 330 (ZNF330), found in Bos taurus (Bovine).